The chain runs to 2151 residues: Polycystin-1-like protein 3 (2151 aa).

The N-terminal stretch at 1-20 is a signal peptide; sequence MLLQRRSWLWLYIRIGVILG. The Extracellular portion of the chain corresponds to 25-1073; sequence RKPSIREQHG…IKLLLHVTNN (1049 aa). Residues 34 to 142 enclose the C-type lectin domain; it reads GGNSCYQLNR…CIEKHHFICQ (109 aa). 2 disulfides stabilise this stretch: C55–C141 and C116–C133. A glycan (N-linked (GlcNAc...) asparagine) is linked at N89. Positions 222-245 are enriched in polar residues; sequence SLTGRPQVTSDTLASSSPPQGTSD. The interval 222-609 is disordered; it reads SLTGRPQVTS…SSSPPWPVIT (388 aa). Positions 246 to 348 are enriched in low complexity; it reads TPASSSPPQV…ASSSPPQGTS (103 aa). Polar residues-rich tracts occupy residues 349–363 and 371–600; these read DTPA…TLDT and QGTS…TPAS. N-linked (GlcNAc...) asparagine glycans are attached at residues N566, N579, N592, N913, and N951. Residues 899–1061 enclose the GAIN-B domain; the sequence is TSLNTSTDHF…FIVPRTVDVE (163 aa). 2 cysteine pairs are disulfide-bonded: C1011–C1039 and C1026–C1041. Positions 1011-1061 are GPS; the sequence is CYFWDRYNRTWKSDGCQVGPKSTILKTQCLCDHLTFFSSDFFIVPRTVDVE. The interval 1045–1061 is stachel; sequence TFFSSDFFIVPRTVDVE. The chain crosses the membrane as a helical span at residues 1074 to 1094; it reads PVGVSLLSSLLGFYILLAMWA. At 1095 to 1283 the chain is on the cytoplasmic side; it reads SRKDREDMQK…NQFTRVQRLS (189 aa). The region spanning 1119–1236 is the PLAT domain; the sequence is SHYLIQVYTG…GNCERDRVFT (118 aa). Residues 1284 to 1304 traverse the membrane as a helical segment; it reads CCMALLLCDMVINIMFWKMGG. The Extracellular portion of the chain corresponds to 1305-1320; that stretch reads TTAKRGTEQLGPLAVT. Residues 1321–1341 form a helical membrane-spanning segment; the sequence is LSELLVSIQTSIILFPIHLIF. The Cytoplasmic segment spans residues 1342-1533; the sequence is GRLFQLIHPP…FCLFRWLKCS (192 aa). The chain crosses the membrane as a helical span at residues 1534–1554; the sequence is CWLLLGVISLASAFFITLYSL. Topologically, residues 1555-1575 are extracellular; the sequence is ELDKDQATSWVISMMLSVLQD. A helical transmembrane segment spans residues 1576–1596; it reads IFISQPIKVIFLTLLFSLMAN. At 1597 to 1665 the chain is on the cytoplasmic side; that stretch reads HMPWLNKDKE…KLTGGTLVQI (69 aa). The helical transmembrane segment at 1666 to 1676 threads the bilayer; the sequence is LFLTLLMTTVY. At 1677-1892 the chain is on the extracellular side; that stretch reads SAKDSSRFFL…SLTSLQSSER (216 aa). N-linked (GlcNAc) asparagine glycosylation is found at N1712 and N1822. A helical transmembrane segment spans residues 1893–1921; the sequence is GFAWIVSQVVYYLLVCYYAFIQGCRLKRQ. Residues 1922 to 1930 lie on the Cytoplasmic side of the membrane; that stretch reads RLAFFTRKR. A helical membrane pass occupies residues 1931-1949; that stretch reads NLLDTSIVLISFSILGLSM. Residues 1950–1980 lie on the Extracellular side of the membrane; the sequence is QSLSLLHKKMQQYHCDRDRFISFYEALRVNS. A helical transmembrane segment spans residues 1981–2002; sequence AVTHLRGFLLLFATVRVWDLLR. At 2003 to 2019 the chain is on the cytoplasmic side; the sequence is HHAQLQVINKTLSKAWD. The chain crosses the membrane as a helical span at residues 2020–2044; it reads EVLGFILIIVVLLSSYAMTFNLLFG. The channel pore-region stretch occupies residues 2043-2081; the sequence is FGWSISDYQSFFRSIVTVVGLLMGTSKHKEVIALYPILG. Residues 2045 to 2077 are Extracellular-facing; the sequence is WSISDYQSFFRSIVTVVGLLMGTSKHKEVIALY. The chain crosses the membrane as a helical span at residues 2078–2097; that stretch reads PILGSLLVLSSIILMGLVII. Over 2098 to 2151 the chain is Cytoplasmic; the sequence is NLFVSAILIAFGKERKACEKEATLTDMLLQKLSSLLGIRLHQNPSEEHADNTGY.

This sequence belongs to the polycystin family. Heterotetramer with PKD2L1, composed of 3 subunit of PKD2L1 and 1 subunit of PKD1L3. Post-translationally, autoproteolytically processed at the GPS region of the GAIN-B domain; this cleavage modulates receptor activity. As to expression, expressed in a subset of taste receptor cells (type III taste cells) distinct from those involved in bitter, sweet and umami taste. Expressed in circumvallate and foliate taste buds, but not in surrounding non-gustatory lingual epithelium cells. Expressed in testis.

Its subcellular location is the cell membrane. It catalyses the reaction Ca(2+)(in) = Ca(2+)(out). The enzyme catalyses Na(+)(in) = Na(+)(out). The catalysed reaction is K(+)(in) = K(+)(out). It carries out the reaction Mg(2+)(in) = Mg(2+)(out). With respect to regulation, the non-selective cation channel is gated following an off-response property by acid: gated open after the removal of acid stimulus, but not during acid application. Non-selective cation channel activity is inhibited by capsaicin. Regulation of non-selective cation channel activity by external Ca(2+) is bimodal, first sensitizing and subsequently inactivating the current. The apo (closed) heterotetramer has an asymmetric selectivity filter (SF) guarded by Lys-2069 in absence of Ca(2+). However, Ca(2+)-entrance to the SF vestibule is accompanied by a swing motion of Lys-2069 on PKD1L3. Its function is as follows. Pore-forming subunit of a heterotetrameric, non-selective cation channel that is permeable to Ca(2+). Also shows permeability towards NA(1+), K(+) and Mg(2+). Heterotetrameric complex channel is activated by external low pH and Ca(2+), but opens only when the extracellular pH rises again and after the removal of acid stimulus. May act as a sour taste receptor in gustatory cells; however, its contribution to sour taste perception is unclear in vivo and may be indirect. This chain is Polycystin-1-like protein 3, found in Mus musculus (Mouse).